The following is a 90-amino-acid chain: Lectin-1 (90 aa).

Gln-1 carries the post-translational modification Pyrrolidone carboxylic acid. A disulfide bridge links Cys-46 with Cys-71.

In terms of processing, the N-terminus is blocked. Contains seven disulfide bonds. Post-translationally, proteolytically cleaved. Major mature form may consist of cleaved, disulfide-bonded N-terminal and C-terminal chains.

Its function is as follows. Lectin with specificity for complex N-linked glycans and O-linked glycans. Has hemagglutinating activity towards rabbit erythrocytes. This is Lectin-1 from Hypnea musciformis (Red alga).